Here is a 589-residue protein sequence, read N- to C-terminus: V-type ATP synthase alpha chain (589 aa).

Residue 239–246 (GPFGAGKT) participates in ATP binding.

The protein belongs to the ATPase alpha/beta chains family.

The catalysed reaction is ATP + H2O + 4 H(+)(in) = ADP + phosphate + 5 H(+)(out). Produces ATP from ADP in the presence of a proton gradient across the membrane. The V-type alpha chain is a catalytic subunit. The chain is V-type ATP synthase alpha chain from Treponema denticola (strain ATCC 35405 / DSM 14222 / CIP 103919 / JCM 8153 / KCTC 15104).